The chain runs to 343 residues: S-adenosylmethionine:tRNA ribosyltransferase-isomerase (343 aa).

Belongs to the QueA family. In terms of assembly, monomer.

It localises to the cytoplasm. The catalysed reaction is 7-aminomethyl-7-carbaguanosine(34) in tRNA + S-adenosyl-L-methionine = epoxyqueuosine(34) in tRNA + adenine + L-methionine + 2 H(+). It functions in the pathway tRNA modification; tRNA-queuosine biosynthesis. Functionally, transfers and isomerizes the ribose moiety from AdoMet to the 7-aminomethyl group of 7-deazaguanine (preQ1-tRNA) to give epoxyqueuosine (oQ-tRNA). The polypeptide is S-adenosylmethionine:tRNA ribosyltransferase-isomerase (Enterococcus faecalis (strain ATCC 700802 / V583)).